The following is an 823-amino-acid chain: Polyadenylation and cleavage factor homolog 11 (823 aa).

The CID domain occupies 3–135; sequence SVESAARDYR…ELDMKINKLD (133 aa). Disordered regions lie at residues 142–176, 188–301, 340–395, 570–643, and 728–755; these read NPQTGRALRDDPQVMAPSQSRPAGNATSPAASTST, SSTP…KTLK, SSAP…LPAP, LPAP…EKRS, and WLTPRASDETNEQEADKPEEPLPGVASS. 2 stretches are compositionally biased toward polar residues: residues 157–176 and 188–198; these read APSQSRPAGNATSPAASTST and SSTPGAASASK. The segment covering 200–226 has biased composition (basic and acidic residues); it reads VVEKTKSPGTVNKEKQVKKEPKQDPLD. Low complexity-rich tracts occupy residues 227 to 242 and 342 to 353; these read KLLPSSSASKTSSSPA and APPFQHPQQHHP. A compositionally biased stretch (pro residues) spans 374-390; that stretch reads PQDPAPIVPVQAPPPQQ. Over residues 571–581 the composition is skewed to low complexity; sequence PAPARSPSSPR. A compositionally biased stretch (polar residues) spans 609–624; sequence QPQQNARWGGANKQQN.

The protein is Polyadenylation and cleavage factor homolog 11 (pcf-11) of Caenorhabditis elegans.